Consider the following 528-residue polypeptide: Transcription factor cghF (528 aa).

The segment at 232-283 (TPPNHATSSTPTSTRTPPTYHPHGPRPKSPLSSTPSPRTESTKSAAPSRDLA) is disordered. Over residues 238–249 (TSSTPTSTRTPP) the composition is skewed to low complexity. Positions 261 to 276 (PLSSTPSPRTESTKSA) are enriched in polar residues.

It is found in the nucleus. Its function is as follows. Transcription factor that regulates the expression of the gene cluster that mediates the biosynthesis of the tetramic acid Sch210972, a potential anti-HIV fungal natural product that contains a decalin core. The polypeptide is Transcription factor cghF (Chaetomium globosum (strain ATCC 6205 / CBS 148.51 / DSM 1962 / NBRC 6347 / NRRL 1970) (Soil fungus)).